The following is an 877-amino-acid chain: DNA mismatch repair protein MutS (877 aa).

An ATP-binding site is contributed by 627–634 (GPNMAGKS).

This sequence belongs to the DNA mismatch repair MutS family.

In terms of biological role, this protein is involved in the repair of mismatches in DNA. It is possible that it carries out the mismatch recognition step. This protein has a weak ATPase activity. The sequence is that of DNA mismatch repair protein MutS from Dinoroseobacter shibae (strain DSM 16493 / NCIMB 14021 / DFL 12).